We begin with the raw amino-acid sequence, 272 residues long: Shikimate dehydrogenase (NADP(+)) (272 aa).

Shikimate-binding positions include 14 to 16 (SKS) and Thr-61. Lys-65 serves as the catalytic Proton acceptor. Glu-77 lines the NADP(+) pocket. 2 residues coordinate shikimate: Asn-86 and Asp-102. NADP(+) is bound by residues 126 to 130 (GAGGA), 149 to 154 (NRTYSR), and Met-213. Tyr-215 contacts shikimate. Gly-237 contributes to the NADP(+) binding site.

It belongs to the shikimate dehydrogenase family. In terms of assembly, homodimer.

The enzyme catalyses shikimate + NADP(+) = 3-dehydroshikimate + NADPH + H(+). The protein operates within metabolic intermediate biosynthesis; chorismate biosynthesis; chorismate from D-erythrose 4-phosphate and phosphoenolpyruvate: step 4/7. Its function is as follows. Involved in the biosynthesis of the chorismate, which leads to the biosynthesis of aromatic amino acids. Catalyzes the reversible NADPH linked reduction of 3-dehydroshikimate (DHSA) to yield shikimate (SA). The sequence is that of Shikimate dehydrogenase (NADP(+)) from Enterobacter sp. (strain 638).